We begin with the raw amino-acid sequence, 261 residues long: 5'-nucleotidase SurE (261 aa).

Residues Asp-12, Asp-13, Ser-43, and Asn-99 each contribute to the a divalent metal cation site.

Belongs to the SurE nucleotidase family. Requires a divalent metal cation as cofactor.

Its subcellular location is the cytoplasm. The enzyme catalyses a ribonucleoside 5'-phosphate + H2O = a ribonucleoside + phosphate. Nucleotidase that shows phosphatase activity on nucleoside 5'-monophosphates. In Polynucleobacter asymbioticus (strain DSM 18221 / CIP 109841 / QLW-P1DMWA-1) (Polynucleobacter necessarius subsp. asymbioticus), this protein is 5'-nucleotidase SurE.